Consider the following 205-residue polypeptide: Small ribosomal subunit protein uS4c (205 aa).

Residues 22-42 are disordered; sequence TSKISKKTNTPGEHGQPQNKL. A compositionally biased stretch (polar residues) spans 28–42; it reads KTNTPGEHGQPQNKL. Positions 94-157 constitute an S4 RNA-binding domain; the sequence is MRLDNIVYRL…ASRDLVKKFV (64 aa).

Belongs to the universal ribosomal protein uS4 family. Part of the 30S ribosomal subunit. Contacts protein S5. The interaction surface between S4 and S5 is involved in control of translational fidelity.

It localises to the plastid. Its subcellular location is the chloroplast. In terms of biological role, one of the primary rRNA binding proteins, it binds directly to 16S rRNA where it nucleates assembly of the body of the 30S subunit. Its function is as follows. With S5 and S12 plays an important role in translational accuracy. This Tupiella akineta (Green alga) protein is Small ribosomal subunit protein uS4c (rps4).